The primary structure comprises 381 residues: L-lactate dehydrogenase (381 aa).

Residues 1 to 380 (MIISASTDYR…TRDSLVRELG (380 aa)) enclose the FMN hydroxy acid dehydrogenase domain. Tyr24 is a binding site for substrate. FMN is bound by residues Ser106 and Gln127. Position 129 (Tyr129) interacts with substrate. Residue Thr155 participates in FMN binding. Residue Arg164 participates in substrate binding. Lys251 contributes to the FMN binding site. The Proton acceptor role is filled by His275. Arg278 provides a ligand contact to substrate. 306–330 (DSGIRSGLDVVRMIALGADTVLIGR) is an FMN binding site.

The protein belongs to the FMN-dependent alpha-hydroxy acid dehydrogenase family. As to quaternary structure, homotetramer. FMN serves as cofactor.

It localises to the cell inner membrane. It catalyses the reaction (S)-lactate + A = pyruvate + AH2. Its function is as follows. Catalyzes the conversion of L-lactate to pyruvate. Is coupled to the respiratory chain. This is L-lactate dehydrogenase from Pseudomonas entomophila (strain L48).